We begin with the raw amino-acid sequence, 231 residues long: MRERAVAACDGASKGNPGPAGWAWVVADASENPVRWEAGPLGKATNNIAELTALERLLASTDPDVPLEVRMDSQYAMKAVTTWLPGWKRNGWKTAAGKPVANRELVVRIDELLDGRSVEFRYVPAHQVDGDRLNDFADRAASQAAVVQEAAGSALGSPEPPPAPDVPAARRAPRRGSSGAARKGGGGSSARTIKAKFPGRCLCGRPYAAGEPIAKNDQGWGHPECRTVAAG.

In terms of domain architecture, RNase H type-1 spans 1–146; sequence MRERAVAACD…ADRAASQAAV (146 aa). Residues aspartate 10, glutamate 50, aspartate 72, and aspartate 138 each contribute to the Mg(2+) site. Low complexity-rich tracts occupy residues 148–157 and 166–181; these read QEAAGSALGS and VPAARRAPRRGSSGAA. Disordered regions lie at residues 148–192 and 212–231; these read QEAA…SART and PIAKNDQGWGHPECRTVAAG.

This sequence belongs to the RNase H family. As to quaternary structure, monomer. Mg(2+) serves as cofactor.

The protein resides in the cytoplasm. The catalysed reaction is Endonucleolytic cleavage to 5'-phosphomonoester.. Endonuclease that specifically degrades the RNA of RNA-DNA hybrids. The sequence is that of Ribonuclease HI (rnhA) from Streptomyces coelicolor (strain ATCC BAA-471 / A3(2) / M145).